Consider the following 127-residue polypeptide: MSSNDSLQRLAQIIESRKPANGGDPGTSYVARLLHRGPDAFLKKIGEEATETVMAAKDLDHGGPTPELRAKLVGEVADLWFHSLIALAHYGLQPADVIAELERREGTSGIEEKALRKVQNRDAAEKS.

This sequence belongs to the PRA-PH family.

Its subcellular location is the cytoplasm. It carries out the reaction 1-(5-phospho-beta-D-ribosyl)-ATP + H2O = 1-(5-phospho-beta-D-ribosyl)-5'-AMP + diphosphate + H(+). It functions in the pathway amino-acid biosynthesis; L-histidine biosynthesis; L-histidine from 5-phospho-alpha-D-ribose 1-diphosphate: step 2/9. The chain is Phosphoribosyl-ATP pyrophosphatase from Polaromonas sp. (strain JS666 / ATCC BAA-500).